The chain runs to 375 residues: MAENEFVKIRRELHKIPELGFQEVKTQRFLLDYINTLPQERLEVKTWKTGLFVKVHGTNPTKTIGYRADIDGLPITEETNYSFQSQHEGLMHACGHDMHMAIGLGVLTYFAQHEIKDNVLFIFQPAEEGPGGAQPMLQSDIMKEWLPDFIFALHVAPEYPVGSIALKEGLLFANTSELFIDLKGKGGHAAYPHTTNDMVVAACQLVSQLQTIVARNVDPLDSAVITVGKIQGGTVQNIIAERARIEGTIRTLSPESMTRVKERIEAIVKGVEVGYQCETAIDYGCMYHQVYNHHEVTREFMEFAKEQTDVDVIECKEAMTGEDFGYMLKDIPGFMFWLGVQSEYGLHHAKLQPHEGAIDIAISLITKYFEHKGNQ.

The active site involves Asp-69. The active-site Proton acceptor is the Glu-128.

This sequence belongs to the peptidase M20A family. N-acetyldiaminopimelate deacetylase subfamily.

The catalysed reaction is N-acetyl-(2S,6S)-2,6-diaminopimelate + H2O = (2S,6S)-2,6-diaminopimelate + acetate. It functions in the pathway amino-acid biosynthesis; L-lysine biosynthesis via DAP pathway; LL-2,6-diaminopimelate from (S)-tetrahydrodipicolinate (acetylase route): step 3/3. Its function is as follows. Catalyzes the conversion of N-acetyl-diaminopimelate to diaminopimelate and acetate. The polypeptide is N-acetyldiaminopimelate deacetylase (Priestia megaterium (strain ATCC 12872 / QMB1551) (Bacillus megaterium)).